The sequence spans 504 residues: Dihydrolipoamide dehydrogenase (504 aa).

The N-terminal 34 residues, methionine 1–tyrosine 34, are a transit peptide targeting the mitochondrion. FAD-binding positions include glutamate 69–cysteine 78, lysine 87, glycine 151, and threonine 180–serine 182. Cysteine 78 and cysteine 83 are oxidised to a cystine. NAD(+)-binding positions include glycine 217 to glutamate 224, glutamate 240, valine 275, and glycine 310. FAD contacts are provided by residues aspartate 351 and methionine 357–histidine 360. Catalysis depends on histidine 483, which acts as the Proton acceptor.

Belongs to the class-I pyridine nucleotide-disulfide oxidoreductase family. Eukaryotic pyruvate dehydrogenase (PDH) complexes are organized as a core consisting of the oligomeric dihydrolipoamide acetyl-transferase (E2), around which are arranged multiple copies of pyruvate dehydrogenase (E1), dihydrolipoamide dehydrogenase (E3) and protein X (E3BP) bound by non-covalent bonds. The Chaetomium thermophilum PDH complex contains 60 E2 units, 12 E3BP units, about 20 E1 units, and 12 or more E3 units. The units are organized in 1 E2 60-mer, 4 E3BP trimers, about 20 E1 tetramers, and a maximum of 12 E3 dimers. The E3BP trimers are bound inside the icosahedral core with tetrahedral symmetry. FAD serves as cofactor.

Its subcellular location is the mitochondrion. The catalysed reaction is N(6)-[(R)-dihydrolipoyl]-L-lysyl-[protein] + NAD(+) = N(6)-[(R)-lipoyl]-L-lysyl-[protein] + NADH + H(+). Lipoamide dehydrogenase is a component of the alpha-ketoacid dehydrogenase complexes. This includes the pyruvate dehydrogenase complex, which catalyzes the overall conversion of pyruvate to acetyl-CoA and CO(2). Also acts as a component of the glycine cleavage system (glycine decarboxylase complex), which catalyzes the degradation of glycine. The 10-megadalton pyruvate dehydrogenase complex contains multiple copies of three enzymatic components: pyruvate dehydrogenase (E1), dihydrolipoamide acetyltransferase (E2) and lipoamide dehydrogenase (E3) and catalyzes the overall oxidative decarboxylation of pyruvate to form acetyl-CoA and CO(2). Within the complex, pyruvate and thiamine pyrophosphate (TPP or vitamin B1) are bound by pyruvate dehydrogenase E1 subunits alpha and beta and pyruvate is decarboxylated leading to the 2-carbon hydrohyethyl bound to TPP. The E2 component contains covalently-bound lipoyl cofactors and transfers the hydroxyethyl group from TPP to an oxidized form of covalently bound lipoamide, and the resulting acetyl group is then transferred to free coenzyme A to form acetyl-CoA and reduced dihydrolipoamide-E2. Finally, the flavoprotein dihydrolipoamide dehydrogenase (E3) re-oxidizes the lipoyl group of dihydrolipoamide-E2 to form lipoamide-E2 and NADH. A fourth subunit, E3BP, is responsible for tethering E3 in proximity to the core, forming the entire metabolon. The chain is Dihydrolipoamide dehydrogenase from Chaetomium thermophilum (strain DSM 1495 / CBS 144.50 / IMI 039719) (Thermochaetoides thermophila).